The sequence spans 207 residues: Outer-membrane lipoprotein LolB (207 aa).

The signal sequence occupies residues methionine 1–alanine 21. Cysteine 22 carries the N-palmitoyl cysteine lipid modification. The S-diacylglycerol cysteine moiety is linked to residue cysteine 22.

Belongs to the LolB family. In terms of assembly, monomer.

The protein resides in the cell outer membrane. Plays a critical role in the incorporation of lipoproteins in the outer membrane after they are released by the LolA protein. In Citrobacter koseri (strain ATCC BAA-895 / CDC 4225-83 / SGSC4696), this protein is Outer-membrane lipoprotein LolB.